A 290-amino-acid chain; its full sequence is Potassium-transporting ATPase subunit beta (290 aa).

Residues 1 to 36 (MAALQEKKSCSQRMEEFQRYCWNPDTGQMLGRTLSR) lie on the Cytoplasmic side of the membrane. Residues 37–57 (WVWISLYYVAFYVVMTGIFAL) traverse the membrane as a helical; Signal-anchor for type II membrane protein segment. The Extracellular segment spans residues 58–290 (CIYTLMCTLD…KVEFKLTIQQ (233 aa)). 5 N-linked (GlcNAc...) asparagine glycosylation sites follow: Asn99, Asn103, Asn130, Asn146, and Asn161. A disulfide bond links Cys131 and Cys152. A disulfide bridge links Cys162 with Cys178. Residues Asn193 and Asn221 are each glycosylated (N-linked (GlcNAc...) asparagine). An immunoglobulin-like region spans residues 194–290 (STAPRADCTF…KVEFKLTIQQ (97 aa)). Cys201 and Cys262 are disulfide-bonded.

Belongs to the X(+)/potassium ATPases subunit beta family. The ATPase pump is composed of two subunits: alpha (catalytic) and beta (regulatory). Interacts with alpha subunit ATP12A; this interaction is required for the formation of a functionally active pump and targeting at the plasma membrane. Interacts (via N-terminus) with alpha subunit ATP4A (via the P-domain). N-glycosylation is necessary for assembly and functional expression of the pump at the plasma membrane.

Its subcellular location is the apical cell membrane. The protein localises to the cell membrane. In terms of biological role, the beta subunit of the gastric H(+)/K(+) ATPase pump which transports H(+) ions in exchange for K(+) ions across the apical membrane of parietal cells. Plays a structural and regulatory role in the assembly and membrane targeting of a functionally active pump. Within a transport cycle, the transfer of a H(+) ion across the membrane is coupled to ATP hydrolysis and is associated with a transient phosphorylation of the alpha subunit that shifts the pump conformation from inward-facing (E1) to outward-facing state (E2). Interacts with the phosphorylation domain of the alpha subunit and functions as a ratchet, stabilizing the lumenal-open E2 conformation and preventing the reverse reaction of the transport cycle. The sequence is that of Potassium-transporting ATPase subunit beta (ATP4B) from Canis lupus familiaris (Dog).